Consider the following 370-residue polypeptide: Tyrosyl-DNA phosphodiesterase 2 (370 aa).

N-acetylmethionine is present on Met-1. The disordered stretch occupies residues 1-32; it reads MASGSSSDAAEPAGPAGRAASAPEAAQAEEDR. Over residues 9 to 26 the composition is skewed to low complexity; the sequence is AAEPAGPAGRAASAPEAA. Lys-34 is covalently cross-linked (Glycyl lysine isopeptide (Lys-Gly) (interchain with G-Cter in SUMO2)). Phosphothreonine; by ACVR1B is present on Thr-99. The segment at 130–134 is interaction with 5' end of substrate DNA; sequence NIDGL. Mg(2+)-binding residues include Asp-132 and Glu-162. Residues 236–241 form an interaction with 5' end of substrate DNA region; the sequence is HLESTR. Residue Asp-272 is the Proton donor/acceptor of the active site. Interaction with 5' end of substrate DNA regions lie at residues 274-276 and 315-321; these read NLR and LRIPAAY.

Belongs to the CCR4/nocturin family. Interacts with TRAF2, TRAF3, TRAF5, TRAF6, TNFRSF8/CD30, TNFRSF5/CD40, TNFRSF1B/TNF-R75, ETS1, ETS2, FLI1, SMAD3 and ACVR1B/ALK4. Mg(2+) serves as cofactor. The cofactor is Mn(2+). Ubiquitinated by TRAF6. In terms of tissue distribution, widely expressed. Expressed in whole brain, cerebellum, quiescent cortical astrocytes and cerebellar granule neurons.

It is found in the nucleus. The protein localises to the PML body. Its subcellular location is the nucleolus. The protein resides in the cytoplasm. Functionally, DNA repair enzyme that can remove a variety of covalent adducts from DNA through hydrolysis of a 5'-phosphodiester bond, giving rise to DNA with a free 5' phosphate. Catalyzes the hydrolysis of dead-end complexes between DNA and the topoisomerase 2 (TOP2) active site tyrosine residue. The 5'-tyrosyl DNA phosphodiesterase activity can enable the repair of TOP2-induced DNA double-strand breaks/DSBs without the need for nuclease activity, creating a 'clean' DSB with 5'-phosphate termini that are ready for ligation. Thereby, protects the transcription of many genes involved in neurological development and maintenance from the abortive activity of TOP2. Hydrolyzes 5'-phosphoglycolates on protruding 5' ends on DSBs due to DNA damage by radiation and free radicals. Has preference for single-stranded DNA or duplex DNA with a 4 base pair overhang as substrate. Also has 3'-tyrosyl DNA phosphodiesterase activity, but less efficiently and much slower than TDP1. Constitutes the major if not only 5'-tyrosyl-DNA phosphodiesterase in cells. Also acts as an adapter by participating in the specific activation of MAP3K7/TAK1 in response to TGF-beta: associates with components of the TGF-beta receptor-TRAF6-TAK1 signaling module and promotes their ubiquitination dependent complex formation. Involved in non-canonical TGF-beta induced signaling routes. May also act as a negative regulator of ETS1 and may inhibit NF-kappa-B activation. Acts as a regulator of ribosome biogenesis following stress. This is Tyrosyl-DNA phosphodiesterase 2 (Tdp2) from Mus musculus (Mouse).